A 158-amino-acid chain; its full sequence is Small ribosomal subunit protein uS7 (158 aa).

This sequence belongs to the universal ribosomal protein uS7 family. As to quaternary structure, part of the 30S ribosomal subunit. Contacts proteins S9 and S11.

Its function is as follows. One of the primary rRNA binding proteins, it binds directly to 16S rRNA where it nucleates assembly of the head domain of the 30S subunit. Is located at the subunit interface close to the decoding center, probably blocks exit of the E-site tRNA. This chain is Small ribosomal subunit protein uS7, found in Acidiphilium cryptum (strain JF-5).